Consider the following 153-residue polypeptide: Ubiquitin-conjugating enzyme E2-18 kDa (153 aa).

A UBC core domain is found at 2 to 149 (AATRRLTREL…AEEFTKKNAE (148 aa)). Residue cysteine 86 is the Glycyl thioester intermediate of the active site.

The protein belongs to the ubiquitin-conjugating enzyme family.

It carries out the reaction S-ubiquitinyl-[E1 ubiquitin-activating enzyme]-L-cysteine + [E2 ubiquitin-conjugating enzyme]-L-cysteine = [E1 ubiquitin-activating enzyme]-L-cysteine + S-ubiquitinyl-[E2 ubiquitin-conjugating enzyme]-L-cysteine.. The protein operates within protein modification; protein ubiquitination. Catalyzes the covalent attachment of ubiquitin to other proteins. This is Ubiquitin-conjugating enzyme E2-18 kDa (Ubc84D) from Drosophila melanogaster (Fruit fly).